Here is a 147-residue protein sequence, read N- to C-terminus: MADSGTAGGAALAAPAPGPGSGGPGPRVYFQSPPGAAGEGPGGADDEGPVRRQGKVTVKYDRKELRKRLNLEEWILEQLTRLYDCQEEEIPELEIDVDELLDMESDDARAARVKELLVDCYKPTEAFISGLLDKIRGMQKLSTPQKK.

A disordered region spans residues 1-55 (MADSGTAGGAALAAPAPGPGSGGPGPRVYFQSPPGAAGEGPGGADDEGPVRRQGK). Ala-2 bears the N-acetylalanine mark. The residue at position 21 (Ser-21) is a Phosphoserine. Phosphotyrosine is present on Tyr-29. Ser-32 carries the post-translational modification Phosphoserine. A Phosphothreonine modification is found at Thr-57. A coiled-coil region spans residues 61-103 (DRKELRKRLNLEEWILEQLTRLYDCQEEEIPELEIDVDELLDM).

Belongs to the PP1 inhibitor family. In terms of processing, phosphorylated primarily on Thr-57 by PKC (in vitro). An unknown Ser is also phosphorylated by PKC (in vitro). Ubiquitous. Expressed at low levels.

The protein localises to the cytoplasm. Functionally, inhibitor of PPP1CA. Has over 50-fold higher inhibitory activity when phosphorylated. The protein is Protein phosphatase 1 regulatory subunit 14B (PPP1R14B) of Homo sapiens (Human).